The sequence spans 332 residues: Large ribosomal subunit protein mL44 (332 aa).

Residues 1-30 (MASGLTRLLLRGPRCLLATAGLTLIPPVRG) constitute a mitochondrion transit peptide. An RNase III domain is found at 86–228 (DLLKTAFVNS…LITQMTGKEL (143 aa)). One can recognise a DRBM domain in the interval 236-306 (NPMGLLVQEL…ARVALRKLYG (71 aa)).

It belongs to the ribonuclease III family. Mitochondrion-specific ribosomal protein mL44 subfamily. Component of the mitochondrial ribosome large subunit (39S) which comprises a 16S rRNA and about 50 distinct proteins.

It is found in the mitochondrion. Component of the 39S subunit of mitochondrial ribosome. May have a function in the assembly/stability of nascent mitochondrial polypeptides exiting the ribosome. This Bos taurus (Bovine) protein is Large ribosomal subunit protein mL44 (MRPL44).